We begin with the raw amino-acid sequence, 103 residues long: DNA-binding protein TRF1 (103 aa).

Its function is as follows. DNA-binding protein that recognizes the inverted terminal repeats of the pGKl linear DNA plasmids. The sequence is that of DNA-binding protein TRF1 (TRF1) from Kluyveromyces lactis (strain ATCC 8585 / CBS 2359 / DSM 70799 / NBRC 1267 / NRRL Y-1140 / WM37) (Yeast).